A 344-amino-acid chain; its full sequence is N-acetyl-gamma-glutamyl-phosphate reductase (344 aa).

Cysteine 150 is a catalytic residue.

It belongs to the NAGSA dehydrogenase family. Type 1 subfamily.

It is found in the cytoplasm. It carries out the reaction N-acetyl-L-glutamate 5-semialdehyde + phosphate + NADP(+) = N-acetyl-L-glutamyl 5-phosphate + NADPH + H(+). It functions in the pathway amino-acid biosynthesis; L-arginine biosynthesis; N(2)-acetyl-L-ornithine from L-glutamate: step 3/4. Catalyzes the NADPH-dependent reduction of N-acetyl-5-glutamyl phosphate to yield N-acetyl-L-glutamate 5-semialdehyde. This Pseudomonas fluorescens (strain Pf0-1) protein is N-acetyl-gamma-glutamyl-phosphate reductase.